A 607-amino-acid polypeptide reads, in one-letter code: Translation initiation factor IF-2 (607 aa).

The tract at residues 54–93 (SAPQAQDSTPVAETPAAAQPAAPQAASSQPAAAQAAQAVA) is disordered. Low complexity predominate over residues 62–93 (TPVAETPAAAQPAAPQAASSQPAAAQAAQAVA). The tr-type G domain maps to 108–281 (HRAPVVTIMG…ELEDLRADPK (174 aa)). Positions 117–124 (GHVDHGKT) are G1. 117–124 (GHVDHGKT) is a binding site for GTP. Positions 142–146 (GITQH) are G2. Residues 163-166 (DTPG) are G3. Residues 163–167 (DTPGH) and 217–220 (NKVD) each bind GTP. Residues 217–220 (NKVD) form a G4 region. A G5 region spans residues 253–255 (SAK).

It belongs to the TRAFAC class translation factor GTPase superfamily. Classic translation factor GTPase family. IF-2 subfamily.

It localises to the cytoplasm. In terms of biological role, one of the essential components for the initiation of protein synthesis. Protects formylmethionyl-tRNA from spontaneous hydrolysis and promotes its binding to the 30S ribosomal subunits. Also involved in the hydrolysis of GTP during the formation of the 70S ribosomal complex. This Deinococcus deserti (strain DSM 17065 / CIP 109153 / LMG 22923 / VCD115) protein is Translation initiation factor IF-2.